Reading from the N-terminus, the 492-residue chain is Forkhead box protein O6 (492 aa).

Disordered stretches follow at residues 1-76 (MAAK…EVGP), 163-235 (SWWM…ASPA), 315-338 (GAGL…APRP), and 466-492 (FNFD…WVPG). The fork-head DNA-binding region spans 88 to 182 (WGNLSYADLI…KTGKTPRRRA (95 aa)). The residue at position 184 (S184) is a Phosphoserine. The span at 192–203 (LRIKGKASKKKQ) shows a compositional bias: basic residues. The span at 225–235 (PAAAKWAASPA) shows a compositional bias: low complexity. Over residues 472 to 486 (LPPPPPGLAGAPPPN) the composition is skewed to pro residues.

In terms of processing, phosphorylation of Ser-184 is be important in regulating the transacriptional activity.

The protein localises to the cytoplasm. The protein resides in the nucleus. Functionally, transcriptional activator. The chain is Forkhead box protein O6 (FOXO6) from Homo sapiens (Human).